The sequence spans 162 residues: Cyclic pyranopterin monophosphate synthase (162 aa).

Substrate contacts are provided by residues 75-77 (LCH) and 113-114 (ME). The active site involves D128.

It belongs to the MoaC family. Homohexamer; trimer of dimers.

The enzyme catalyses (8S)-3',8-cyclo-7,8-dihydroguanosine 5'-triphosphate = cyclic pyranopterin phosphate + diphosphate. Its pathway is cofactor biosynthesis; molybdopterin biosynthesis. Catalyzes the conversion of (8S)-3',8-cyclo-7,8-dihydroguanosine 5'-triphosphate to cyclic pyranopterin monophosphate (cPMP). The sequence is that of Cyclic pyranopterin monophosphate synthase from Xanthobacter autotrophicus (strain ATCC BAA-1158 / Py2).